The primary structure comprises 270 residues: ATP synthase subunit delta (270 aa).

This sequence belongs to the ATPase delta chain family. As to quaternary structure, F-type ATPases have 2 components, F(1) - the catalytic core - and F(0) - the membrane proton channel. F(1) has five subunits: alpha(3), beta(3), gamma(1), delta(1), epsilon(1). F(0) has three main subunits: a(1), b(2) and c(10-14). The alpha and beta chains form an alternating ring which encloses part of the gamma chain. F(1) is attached to F(0) by a central stalk formed by the gamma and epsilon chains, while a peripheral stalk is formed by the delta and b chains.

Its subcellular location is the cell membrane. Functionally, f(1)F(0) ATP synthase produces ATP from ADP in the presence of a proton or sodium gradient. F-type ATPases consist of two structural domains, F(1) containing the extramembraneous catalytic core and F(0) containing the membrane proton channel, linked together by a central stalk and a peripheral stalk. During catalysis, ATP synthesis in the catalytic domain of F(1) is coupled via a rotary mechanism of the central stalk subunits to proton translocation. This protein is part of the stalk that links CF(0) to CF(1). It either transmits conformational changes from CF(0) to CF(1) or is implicated in proton conduction. This Kocuria rhizophila (strain ATCC 9341 / DSM 348 / NBRC 103217 / DC2201) protein is ATP synthase subunit delta.